Here is a 390-residue protein sequence, read N- to C-terminus: GTPase Obg (390 aa).

Positions 1–159 (MKFVDEASIL…RELLLELMLL (159 aa)) constitute an Obg domain. The segment at 127 to 147 (NTRFKSSVNRTPRQKTNGTPG) is disordered. Over residues 129–145 (RFKSSVNRTPRQKTNGT) the composition is skewed to polar residues. The 174-residue stretch at 160 to 333 (ADVGMLGMPN…LCWDVMTFIL (174 aa)) folds into the OBG-type G domain. GTP is bound by residues 166-173 (GMPNAGKS), 191-195 (FTTLV), 213-216 (DIPG), 283-286 (NKID), and 314-316 (SAA). Mg(2+) is bound by residues Ser173 and Thr193.

The protein belongs to the TRAFAC class OBG-HflX-like GTPase superfamily. OBG GTPase family. In terms of assembly, monomer. It depends on Mg(2+) as a cofactor.

It is found in the cytoplasm. In terms of biological role, an essential GTPase which binds GTP, GDP and possibly (p)ppGpp with moderate affinity, with high nucleotide exchange rates and a fairly low GTP hydrolysis rate. Plays a role in control of the cell cycle, stress response, ribosome biogenesis and in those bacteria that undergo differentiation, in morphogenesis control. The protein is GTPase Obg of Shigella sonnei (strain Ss046).